We begin with the raw amino-acid sequence, 269 residues long: Hydroxyethylthiazole kinase (269 aa).

M45 contacts substrate. Positions 121 and 167 each coordinate ATP. Residue G194 coordinates substrate.

The protein belongs to the Thz kinase family. The cofactor is Mg(2+).

The catalysed reaction is 5-(2-hydroxyethyl)-4-methylthiazole + ATP = 4-methyl-5-(2-phosphooxyethyl)-thiazole + ADP + H(+). The protein operates within cofactor biosynthesis; thiamine diphosphate biosynthesis; 4-methyl-5-(2-phosphoethyl)-thiazole from 5-(2-hydroxyethyl)-4-methylthiazole: step 1/1. Its function is as follows. Catalyzes the phosphorylation of the hydroxyl group of 4-methyl-5-beta-hydroxyethylthiazole (THZ). This Geobacillus sp. (strain WCH70) protein is Hydroxyethylthiazole kinase.